The sequence spans 737 residues: Prospero homeobox protein 1 (737 aa).

Residues 1-28 (MPDHDSTALLSRQTKRRRVDIGVKRTVG) are interaction with RORG. Residues 103–135 (KNGGTEPSFQASGLSSTGSEVHQEDICSNSSRD) show a composition bias toward polar residues. A disordered region spans residues 103 to 147 (KNGGTEPSFQASGLSSTGSEVHQEDICSNSSRDSPPECLSPFGRP). Residues Ser-177, Ser-179, Ser-199, Ser-291, and Ser-295 each carry the phosphoserine modification. The segment at 178-221 (HSPSVALRGNENEREMAPQSVSPRESYRENKRKQKLPQQQQQSF) is disordered. Over residues 320–337 (MAENKPKREGSNKERDHG) the composition is skewed to basic and acidic residues. Disordered stretches follow at residues 320-344 (MAEN…LQPE) and 444-476 (RKNS…AGFT). A Glycyl lysine isopeptide (Lys-Gly) (interchain with G-Cter in SUMO2) cross-link involves residue Lys-324. Positions 464–476 (LHQSPLSATAGFT) are enriched in polar residues. Phosphoserine occurs at positions 511 and 514. The interval 525–547 (RTKMSSHHLSHHPCSPAHPPSTA) is disordered. At Ser-557 the chain carries Phosphoserine. In terms of domain architecture, Prospero-type homeo spans 577–635 (QEGLSPNHLKKAKLMFFYTRYPSSNMLKTYFSDVKFNRCITSQLIKWFSNFREFYYIQM). The homeo-Prospero stretch occupies residues 577–735 (QEGLSPNHLK…KSPNCLQELL (159 aa)). Residues 636-735 (EKYARQAIND…KSPNCLQELL (100 aa)) form the Prospero domain. The segment at 723 to 729 (EIFKSPN) is essential for nuclear localization, interaction with RORG, repression of RORG transcriptional activator activity.

The protein belongs to the Prospero homeodomain family. Interacts with RORA and RORG (via AF-2 motif). As to expression, expressed in the young neurons of the subventricular region of the CNS, developing eye lens and pancreas. It is also found in the developing liver, heart and skeletal muscle. In the eye, expressed in the lens and retina at postnatal day 10. In the retina, localized to the inner nuclear layer. In the lens, localized to epithelial and fiber cells.

The protein resides in the nucleus. In terms of biological role, transcription factor involved in developmental processes such as cell fate determination, gene transcriptional regulation and progenitor cell regulation in a number of organs. Plays a critical role in embryonic development and functions as a key regulatory protein in neurogenesis and the development of the heart, eye lens, liver, pancreas and the lymphatic system. Involved in the regulation of the circadian rhythm. Represses: transcription of the retinoid-related orphan receptor RORG, transcriptional activator activity of RORA and RORG and the expression of RORA/G-target genes including core clock components: BMAL1, NPAS2 and CRY1 and metabolic genes: AVPR1A and ELOVL3. The protein is Prospero homeobox protein 1 (Prox1) of Mus musculus (Mouse).